The following is a 364-amino-acid chain: Selection and upkeep of intraepithelial T-cells protein 11 (364 aa).

An N-terminal signal peptide occupies residues 1–28 (MEPSASCLPGFFMVCILLKITVLTQVMS). The Ig-like V-type domain occupies 29–118 (LDIQINTQIP…TNQEKRRSII (90 aa)). The Extracellular portion of the chain corresponds to 29–138 (LDIQINTQIP…MSLMSNNLLY (110 aa)). Cys48 and Cys102 are disulfide-bonded. A helical membrane pass occupies residues 139–159 (LGIYLIFILFLNFLKGILFCL). Residues 160–186 (TKRLVHFRKRMIKIKKVWSNKTRACCP) lie on the Cytoplasmic side of the membrane. Residues 187 to 207 (LIWEFLEIVLFIAFLPLYLMF) traverse the membrane as a helical segment. Residues 208 to 230 (RIRVFTLDEAHILYNNWLWKVCK) are Extracellular-facing. Residues 231–251 (TLIAMMILFTVLILFLLWTLN) traverse the membrane as a helical segment. The Cytoplasmic segment spans residues 252-364 (RYGKMPCLSS…LYSKLGNLTH (113 aa)).

This sequence belongs to the SKINT family. In terms of tissue distribution, expressed in skin and thymus.

Its subcellular location is the membrane. In terms of biological role, may act by engaging a cell surface molecule on immature T-cells in the embryonic thymus. The protein is Selection and upkeep of intraepithelial T-cells protein 11 (Skint11) of Mus musculus (Mouse).